We begin with the raw amino-acid sequence, 301 residues long: Protoheme IX farnesyltransferase 1 (301 aa).

The next 9 membrane-spanning stretches (helical) occupy residues 29–49, 51–71, 101–121, 123–143, 150–170, 177–197, 223–243, 244–264, and 274–294; these read VVAL…PHAV, VQPL…AAAL, ALIF…SLVN, LTAW…TAYL, NIVI…TAVT, ALLL…ALAI, CILL…LVGM, CGPV…YKAW, and LAMQ…MALL.

This sequence belongs to the UbiA prenyltransferase family. Protoheme IX farnesyltransferase subfamily.

The protein localises to the cell inner membrane. The catalysed reaction is heme b + (2E,6E)-farnesyl diphosphate + H2O = Fe(II)-heme o + diphosphate. It functions in the pathway porphyrin-containing compound metabolism; heme O biosynthesis; heme O from protoheme: step 1/1. In terms of biological role, converts heme B (protoheme IX) to heme O by substitution of the vinyl group on carbon 2 of heme B porphyrin ring with a hydroxyethyl farnesyl side group. In Shewanella baltica (strain OS195), this protein is Protoheme IX farnesyltransferase 1.